We begin with the raw amino-acid sequence, 538 residues long: Xylosidase/arabinosidase 43B (538 aa).

E367 serves as the catalytic Proton donor.

It belongs to the glycosyl hydrolase 43 family.

The enzyme catalyses Hydrolysis of (1-&gt;4)-beta-D-xylans, to remove successive D-xylose residues from the non-reducing termini.. It carries out the reaction Hydrolysis of terminal non-reducing alpha-L-arabinofuranoside residues in alpha-L-arabinosides.. Activity is inhibited by Ag(+), Li(+), Cu(2+), Cr(3+), Co(3+), Ni(2+), Mg(2+), Zn(2+), EDTA, SDS and beta-mercaptoethanol; but not by Mn(2+), Pb(2+), Ca(2+) and Fe(3+). Its function is as follows. Bifunctional beta-xylosidase/alpha-L-arabinosidases with a low level of xylanase activity. Is most active on 4-nitrophenyl beta-D-xylopyranoside (pNPX) (defined as 100%), moderate on p-nitrophenyl-alpha-L-arabinofuranoside (pNPA) (56.6%), and weak on beechwood xylan (5.7%) and birchwood xylan (2.7%). Is able to attack xylooligosacchardies with degrees of polymerisation of 2-5, releasing the amounts of reducing sugars in the order of xylopentose &gt; xylotetraose &gt; xylotriose &gt; xylobiose, i.e. the rate of xylose released from xylooligosacchardies increased with the chain length. No activity was detected in the presence of carboxymethyl cellulose-sodium (CMC-Na), sugar beet arabinan, AZCL-arabinan (debranched), 4-nitrophenyl a-D - galactopyranoside, 2-nitrophenyl beta-D-galactopyranoside, and 4-nitrophenyl alpha-D-glucopyranoside. In Humicola insolens (Soft-rot fungus), this protein is Xylosidase/arabinosidase 43B.